Consider the following 78-residue polypeptide: Small ribosomal subunit protein uS17 (78 aa).

The protein belongs to the universal ribosomal protein uS17 family. As to quaternary structure, part of the 30S ribosomal subunit.

Functionally, one of the primary rRNA binding proteins, it binds specifically to the 5'-end of 16S ribosomal RNA. This chain is Small ribosomal subunit protein uS17, found in Maricaulis maris (strain MCS10) (Caulobacter maris).